A 215-amino-acid chain; its full sequence is GTP-binding nuclear protein Ran (215 aa).

The Small GTPase Ran-type domain occupies 6–170 (DIPTFKLVLV…LWLVRKLLGD (165 aa)). GTP contacts are provided by residues 17–24 (DGGTGKTT), 35–41 (EKKYVAT), G67, 121–124 (NFVD), and 149–151 (SAK). A switch-I region spans residues 36–44 (KKYVATLGV). A switch-II region spans residues 67-83 (GQEKFGGLRDGYYIQGQ). Residues 210–215 (DDDEDL) are interaction with RANBP1.

The protein belongs to the small GTPase superfamily. Ran family. In terms of assembly, monomer. Interacts with RANGAP1, which promotes RAN-mediated GTP hydrolysis. Interacts with KPNB1. Interaction with KPNB1 inhibits RANGAP1-mediated stimulation of GTPase activity. Interacts with RCC1 which promotes the exchange of RAN-bound GDP by GTP. Interaction with KPNB1 inhibits RCC1-mediated exchange of RAN-bound GDP by GTP. Interacts (GTP-bound form) with TNPO1; the interaction is direct. Interacts with KPNB1 and with TNPO1; both inhibit RAN GTPase activity. Interacts (via C-terminus) with RANBP1, which alleviates the inhibition of RAN GTPase activity. Interacts with RANGRF, which promotes the release of bound guanine nucleotide. RANGRF and RCC1 compete for an overlapping binding site on RAN. Identified in a complex with KPNA2 and CSE1L; interaction with RANBP1 mediates dissociation of RAN from this complex. Interaction with both RANBP1 and KPNA2 promotes dissociation of the complex between RAN and KPNB1. Identified in a complex composed of RAN, RANGAP1 and RANBP1. Identified in a complex that contains TNPO1, RAN and RANBP1. Identified in a nuclear export complex with XPO1. Interaction with RANBP1 or RANBP2 induces a conformation change in the complex formed by XPO1 and RAN that triggers the release of the nuclear export signal of cargo proteins. Component of a nuclear export receptor complex composed of KPNB1, RAN, SNUPN and XPO1. The cofactor is Mg(2+).

It localises to the nucleus. The protein localises to the nucleus envelope. The protein resides in the cytoplasm. Its subcellular location is the cytosol. In terms of biological role, GTPase involved in nucleocytoplasmic transport, participating both to the import and the export from the nucleus of proteins and RNAs. Switches between a cytoplasmic GDP- and a nuclear GTP-bound state by nucleotide exchange and GTP hydrolysis. Nuclear import receptors such as importin beta bind their substrates only in the absence of GTP-bound RAN and release them upon direct interaction with GTP-bound RAN, while export receptors behave in the opposite way. Thereby, RAN controls cargo loading and release by transport receptors in the proper compartment and ensures the directionality of the transport. Interaction with RANBP1 induces a conformation change in the complex formed by XPO1 and RAN that triggers the release of the nuclear export signal of cargo proteins. RAN (GTP-bound form) triggers microtubule assembly at mitotic chromosomes and is required for normal mitotic spindle assembly and chromosome segregation. Required for normal progress through mitosis. This is GTP-binding nuclear protein Ran (ran-1) from Onchocerca volvulus.